A 230-amino-acid polypeptide reads, in one-letter code: Ribosomal RNA small subunit methyltransferase I (230 aa).

This sequence belongs to the methyltransferase superfamily. RsmI family.

It is found in the cytoplasm. The enzyme catalyses cytidine(1402) in 16S rRNA + S-adenosyl-L-methionine = 2'-O-methylcytidine(1402) in 16S rRNA + S-adenosyl-L-homocysteine + H(+). In terms of biological role, catalyzes the 2'-O-methylation of the ribose of cytidine 1402 (C1402) in 16S rRNA. This Hydrogenobaculum sp. (strain Y04AAS1) protein is Ribosomal RNA small subunit methyltransferase I.